Here is a 521-residue protein sequence, read N- to C-terminus: GMP synthase [glutamine-hydrolyzing] (521 aa).

The 193-residue stretch at 5–197 (KILILDFGSQ…VLDICGAQPS (193 aa)) folds into the Glutamine amidotransferase type-1 domain. The active-site Nucleophile is the Cys-81. Active-site residues include His-171 and Glu-173. One can recognise a GMPS ATP-PPase domain in the interval 198 to 390 (WTMPNYIEEA…LGLPREMVYR (193 aa)). 225–231 (SGGVDSS) contacts ATP.

As to quaternary structure, homodimer.

It carries out the reaction XMP + L-glutamine + ATP + H2O = GMP + L-glutamate + AMP + diphosphate + 2 H(+). It functions in the pathway purine metabolism; GMP biosynthesis; GMP from XMP (L-Gln route): step 1/1. Its function is as follows. Catalyzes the synthesis of GMP from XMP. This is GMP synthase [glutamine-hydrolyzing] from Neisseria meningitidis serogroup C / serotype 2a (strain ATCC 700532 / DSM 15464 / FAM18).